A 485-amino-acid polypeptide reads, in one-letter code: Cysteine--tRNA ligase (485 aa).

Residue Cys-27 coordinates Zn(2+). A 'HIGH' region motif is present at residues 29–39 (ITAYDLCHIGH). Residues Cys-208, His-233, and Glu-237 each contribute to the Zn(2+) site. Positions 265–269 (KMSKS) match the 'KMSKS' region motif. Lys-268 lines the ATP pocket.

The protein belongs to the class-I aminoacyl-tRNA synthetase family. In terms of assembly, monomer. Zn(2+) serves as cofactor.

The protein resides in the cytoplasm. It catalyses the reaction tRNA(Cys) + L-cysteine + ATP = L-cysteinyl-tRNA(Cys) + AMP + diphosphate. The protein is Cysteine--tRNA ligase of Solidesulfovibrio magneticus (strain ATCC 700980 / DSM 13731 / RS-1) (Desulfovibrio magneticus).